The following is a 357-amino-acid chain: Cyclic AMP-responsive element-binding protein 5 (357 aa).

The disordered stretch occupies residues 114-239 (RQDQTPHHHL…FLERNRAAAT (126 aa)). 2 stretches are compositionally biased toward basic residues: residues 120-129 (HHHLHSHPHQ) and 138-175 (PYPH…HPAH). Positions 186–195 (TGNQAQVSPA) are enriched in polar residues. The segment covering 196–206 (TQQMQPTQTIQ) has biased composition (low complexity). Residues 218–235 (VVDEDPDERRRKFLERNR) show a composition bias toward basic and acidic residues. The bZIP domain maps to 224-287 (DERRRKFLER…AQLKQLLLTH (64 aa)). The interval 226–246 (RRRKFLERNRAAATRCRQKRK) is basic motif. The leucine-zipper stretch occupies residues 252-280 (LEKKAEELTQTNMQLQNEVSMLKNEVAQL). Residues 298–318 (ESQGYLSPESSPPASPVPACS) are disordered.

This sequence belongs to the bZIP family. Binds DNA as a homodimer or as a heterodimer with JUN or ATF2/CREBP1.

It is found in the nucleus. Binds to the cAMP response element and activates transcription. The polypeptide is Cyclic AMP-responsive element-binding protein 5 (Creb5) (Mus musculus (Mouse)).